Reading from the N-terminus, the 207-residue chain is Putative 3-methyladenine DNA glycosylase (207 aa).

Belongs to the DNA glycosylase MPG family.

In Listeria monocytogenes serotype 4a (strain HCC23), this protein is Putative 3-methyladenine DNA glycosylase.